Consider the following 169-residue polypeptide: Protein-export protein SecB (169 aa).

This sequence belongs to the SecB family. Homotetramer, a dimer of dimers. One homotetramer interacts with 1 SecA dimer.

The protein localises to the cytoplasm. Functionally, one of the proteins required for the normal export of preproteins out of the cell cytoplasm. It is a molecular chaperone that binds to a subset of precursor proteins, maintaining them in a translocation-competent state. It also specifically binds to its receptor SecA. The sequence is that of Protein-export protein SecB from Pseudoalteromonas atlantica (strain T6c / ATCC BAA-1087).